The chain runs to 259 residues: Malonyl-[acyl-carrier protein] O-methyltransferase 2 (259 aa).

The protein belongs to the methyltransferase superfamily.

The catalysed reaction is malonyl-[ACP] + S-adenosyl-L-methionine = malonyl-[ACP] methyl ester + S-adenosyl-L-homocysteine. The protein operates within cofactor biosynthesis; biotin biosynthesis. In terms of biological role, converts the free carboxyl group of a malonyl-thioester to its methyl ester by transfer of a methyl group from S-adenosyl-L-methionine (SAM). It allows to synthesize pimeloyl-ACP via the fatty acid synthetic pathway. This chain is Malonyl-[acyl-carrier protein] O-methyltransferase 2, found in Ilyobacter polytropus (strain ATCC 51220 / DSM 2926 / LMG 16218 / CuHBu1).